The sequence spans 445 residues: MEEERRVLFGKYEMGRLLGKGTFAKVYYGKEIIGGECVAIKVINKDQVMKRPGMMEQIKREISIMKLVRHPNIVELKEVMATKTKIFFVMEFVKGGELFCKISKGKLHEDAARRYFQQLISAVDYCHSRGVSHRDLKPENLLLDENGDLKISDFGLSALPEQILQDGLLHTQCGTPAYVAPEVLKKKGYDGAKADIWSCGVVLYVLLAGCLPFQDENLMNMYRKIFRADFEFPPWFSPEARRLISKLLVVDPDRRISIPAIMRTPWLRKNFTPPLAFKIDEPICSQSSKNNEEEEEDGDCENQTEPISPKFFNAFEFISSMSSGFDLSSLFESKRKVQSVFTSRSSATEVMEKIETVTKEMNMKVKRTKDFKVKMEGKTEGRKGRLSMTAEVFEVAPEISVVEFCKSAGDTLEYDRLYEEEVRPALNDIVWSWHGDNNNTSSEDC.

In terms of domain architecture, Protein kinase spans 12-267; that stretch reads YEMGRLLGKG…IPAIMRTPWL (256 aa). Residues 18-26 and lysine 41 contribute to the ATP site; that span reads LGKGTFAKV. Catalysis depends on aspartate 135, which acts as the Proton acceptor. An activation loop region spans residues 153-182; it reads DFGLSALPEQILQDGLLHTQCGTPAYVAPE. At serine 157 the chain carries Phosphoserine. At threonine 171 the chain carries Phosphothreonine. The NAF domain maps to 307–332; the sequence is ISPKFFNAFEFISSMSSGFDLSSLFE. Positions 336–366 are PPI; the sequence is KVQSVFTSRSSATEVMEKIETVTKEMNMKVK.

Belongs to the protein kinase superfamily. CAMK Ser/Thr protein kinase family. SNF1 subfamily. Mn(2+) is required as a cofactor.

The catalysed reaction is L-seryl-[protein] + ATP = O-phospho-L-seryl-[protein] + ADP + H(+). It carries out the reaction L-threonyl-[protein] + ATP = O-phospho-L-threonyl-[protein] + ADP + H(+). Functionally, CIPK serine-threonine protein kinases interact with CBL proteins. Binding of a CBL protein to the regulatory NAF domain of CIPK protein lead to the activation of the kinase in a calcium-dependent manner. The sequence is that of CBL-interacting serine/threonine-protein kinase 5 (CIPK5) from Arabidopsis thaliana (Mouse-ear cress).